Reading from the N-terminus, the 129-residue chain is Fluoride-specific ion channel FluC (129 aa).

4 helical membrane passes run 5 to 25, 32 to 52, 60 to 80, and 99 to 119; these read LTIALFCAGGGLARYYLSGWV, AFPFGTLAVNLIGAYCIGLIM, LIPATLRLGLTVGFMGGLTTF, and AMVNALASVVMCLLCTWLGVI. Positions 75 and 78 each coordinate Na(+).

Belongs to the fluoride channel Fluc/FEX (TC 1.A.43) family.

The protein resides in the cell inner membrane. The enzyme catalyses fluoride(in) = fluoride(out). Its activity is regulated as follows. Na(+) is not transported, but it plays an essential structural role and its presence is essential for fluoride channel function. Fluoride-specific ion channel. Important for reducing fluoride concentration in the cell, thus reducing its toxicity. This chain is Fluoride-specific ion channel FluC, found in Pelobacter propionicus (strain DSM 2379 / NBRC 103807 / OttBd1).